Consider the following 1204-residue polypeptide: TPR repeat-containing protein DDB_G0287999 (1204 aa).

Over residues 32 to 48 (TTDTTTTTSTSTTTDTD) the composition is skewed to low complexity. Residues 32–55 (TTDTTTTTSTSTTTDTDTNSEKSN) form a disordered region. TPR repeat units follow at residues 263-296 (SKGLLLMIEFYIKIGDIDSAFKFFEVNFKDYKDL), 379-412 (NDSNNIIKNSSSKLEFNDDCVSNYKKLVNFDQLY), and 583-617 (IQHFVETALIYLINDNSYQEAVKLYIYFLKEGSVT). The disordered stretch occupies residues 360–387 (QPPPQEQQLMDDDSNSNSNNDSNNIIKN). Residues 374-387 (NSNSNNDSNNIIKN) are compositionally biased toward low complexity. Disordered regions lie at residues 639 to 660 (NNNNNNNNNNNNNNNNNNNNNN) and 761 to 797 (DDNDNDNNNNNNNNNNNNNDDDDGGGHGGGDVFKTTT). Low complexity predominate over residues 766–778 (DNNNNNNNNNNNN).

The sequence is that of TPR repeat-containing protein DDB_G0287999 from Dictyostelium discoideum (Social amoeba).